The following is a 372-amino-acid chain: Chloromuconate cycloisomerase (372 aa).

The Proton acceptor role is filled by Lys-158. Residues Asp-187, Glu-213, and Asp-238 each contribute to the Mn(2+) site. The Proton donor role is filled by Glu-316.

The protein belongs to the mandelate racemase/muconate lactonizing enzyme family. The cofactor is Mn(2+).

The enzyme catalyses 2-[(2R)-2-chloro-2,5-dihydro-5-oxofuryl]acetate = 3-chloro-cis,cis-muconate + H(+). Its pathway is aromatic compound metabolism; 3-chlorocatechol degradation. The chain is Chloromuconate cycloisomerase (tfdDII) from Cupriavidus pinatubonensis (strain JMP 134 / LMG 1197) (Cupriavidus necator (strain JMP 134)).